We begin with the raw amino-acid sequence, 364 residues long: D-alanine--D-alanine ligase (364 aa).

Residues 134–344 (KVLLKSFNIP…YESLVDKLIT (211 aa)) form the ATP-grasp domain. 167-222 (NNKLNYPVIVKPSVLGSSIGINVAYNVSQIEKYIEEAFEYDLTVVVEKFIKAREIE) contributes to the ATP binding site. Mg(2+)-binding residues include D297, E311, and N313.

This sequence belongs to the D-alanine--D-alanine ligase family. It depends on Mg(2+) as a cofactor. The cofactor is Mn(2+).

It localises to the cytoplasm. It carries out the reaction 2 D-alanine + ATP = D-alanyl-D-alanine + ADP + phosphate + H(+). It participates in cell wall biogenesis; peptidoglycan biosynthesis. Cell wall formation. The sequence is that of D-alanine--D-alanine ligase from Borrelia duttonii (strain Ly).